Here is a 299-residue protein sequence, read N- to C-terminus: Protein N-terminal and lysine N-methyltransferase EFM7 (299 aa).

S-adenosyl-L-methionine-binding positions include tryptophan 74, 100–102, aspartate 122, tryptophan 155, and serine 178; that span reads GAG.

The protein belongs to the class I-like SAM-binding methyltransferase superfamily. EFM7 family.

It is found in the cytoplasm. Its function is as follows. S-adenosyl-L-methionine-dependent protein methyltransferase that trimethylates the N-terminal glycine 'Gly-2' of elongation factor 1-alpha, before also catalyzing the mono- and dimethylation of 'Lys-3'. The protein is Protein N-terminal and lysine N-methyltransferase EFM7 of Cryptococcus neoformans var. neoformans serotype D (strain B-3501A) (Filobasidiella neoformans).